A 141-amino-acid chain; its full sequence is Nucleoside diphosphate kinase (141 aa).

Residues lysine 11, phenylalanine 59, arginine 87, threonine 93, arginine 104, and asparagine 114 each coordinate ATP. Residue histidine 117 is the Pros-phosphohistidine intermediate of the active site.

This sequence belongs to the NDK family. As to quaternary structure, homotetramer. The cofactor is Mg(2+).

Its subcellular location is the cytoplasm. The catalysed reaction is a 2'-deoxyribonucleoside 5'-diphosphate + ATP = a 2'-deoxyribonucleoside 5'-triphosphate + ADP. It catalyses the reaction a ribonucleoside 5'-diphosphate + ATP = a ribonucleoside 5'-triphosphate + ADP. Major role in the synthesis of nucleoside triphosphates other than ATP. The ATP gamma phosphate is transferred to the NDP beta phosphate via a ping-pong mechanism, using a phosphorylated active-site intermediate. This chain is Nucleoside diphosphate kinase, found in Bdellovibrio bacteriovorus (strain ATCC 15356 / DSM 50701 / NCIMB 9529 / HD100).